The primary structure comprises 267 residues: Phosphonoacetaldehyde hydrolase (267 aa).

The Nucleophile role is filled by D10. Mg(2+)-binding residues include D10 and A12. The active-site Schiff-base intermediate with substrate is the K51. Residue D184 participates in Mg(2+) binding.

This sequence belongs to the HAD-like hydrolase superfamily. PhnX family. As to quaternary structure, homodimer. The cofactor is Mg(2+).

It carries out the reaction phosphonoacetaldehyde + H2O = acetaldehyde + phosphate + H(+). Functionally, involved in phosphonate degradation. The sequence is that of Phosphonoacetaldehyde hydrolase from Paraburkholderia phytofirmans (strain DSM 17436 / LMG 22146 / PsJN) (Burkholderia phytofirmans).